The chain runs to 401 residues: 3-oxoadipyl-CoA/3-oxo-5,6-dehydrosuberyl-CoA thiolase (401 aa).

Cysteine 90 (acyl-thioester intermediate) is an active-site residue. Residues histidine 357 and cysteine 387 each act as proton acceptor in the active site.

It belongs to the thiolase-like superfamily. Thiolase family.

It carries out the reaction succinyl-CoA + acetyl-CoA = 3-oxoadipyl-CoA + CoA. It catalyses the reaction 2,3-didehydroadipoyl-CoA + acetyl-CoA = 3-oxo-5,6-didehydrosuberyl-CoA + CoA. It functions in the pathway aromatic compound metabolism; phenylacetate degradation. Catalyzes the thiolytic cleavage of the beta-keto C8 intermediate 3-oxo-5,6-dehydrosuberyl-CoA with CoA to yield the C6 intermediate 2,3-dehydroadipyl-CoA and acetyl-CoA. Besides it catalyzes also the last step of the pathway, in which 3-oxoadipyl-CoA similarly is cleaved to acetyl-CoA and succinyl-CoA. This is 3-oxoadipyl-CoA/3-oxo-5,6-dehydrosuberyl-CoA thiolase (paaJ) from Escherichia coli (strain K12).